Reading from the N-terminus, the 434-residue chain is 3-phosphoshikimate 1-carboxyvinyltransferase (434 aa).

3 residues coordinate 3-phosphoshikimate: K22, S23, and R27. K22 contacts phosphoenolpyruvate. Phosphoenolpyruvate is bound by residues G93 and R121. Residues S168, S169, Q170, S199, D320, and K347 each coordinate 3-phosphoshikimate. Residue Q170 coordinates phosphoenolpyruvate. D320 functions as the Proton acceptor in the catalytic mechanism. The phosphoenolpyruvate site is built by R351, R394, and K419.

It belongs to the EPSP synthase family. In terms of assembly, monomer.

It is found in the cytoplasm. The enzyme catalyses 3-phosphoshikimate + phosphoenolpyruvate = 5-O-(1-carboxyvinyl)-3-phosphoshikimate + phosphate. It participates in metabolic intermediate biosynthesis; chorismate biosynthesis; chorismate from D-erythrose 4-phosphate and phosphoenolpyruvate: step 6/7. Functionally, catalyzes the transfer of the enolpyruvyl moiety of phosphoenolpyruvate (PEP) to the 5-hydroxyl of shikimate-3-phosphate (S3P) to produce enolpyruvyl shikimate-3-phosphate and inorganic phosphate. The chain is 3-phosphoshikimate 1-carboxyvinyltransferase from Burkholderia vietnamiensis (strain G4 / LMG 22486) (Burkholderia cepacia (strain R1808)).